The chain runs to 115 residues: ATP-dependent Clp protease adapter protein ClpS (115 aa).

Belongs to the ClpS family. Binds to the N-terminal domain of the chaperone ClpA.

In terms of biological role, involved in the modulation of the specificity of the ClpAP-mediated ATP-dependent protein degradation. The chain is ATP-dependent Clp protease adapter protein ClpS from Leptothrix cholodnii (strain ATCC 51168 / LMG 8142 / SP-6) (Leptothrix discophora (strain SP-6)).